The primary structure comprises 206 residues: High-affinity nitrate transporter-activating protein 2.1 (206 aa).

Positions M1–A27 are cleaved as a signal peptide. The helical transmembrane segment at V180–E200 threads the bilayer.

Belongs to the NAR2 family. In terms of assembly, heterotetramer composed of two NRT2.1, NRT2.2 or NRT2.3 and two NAR2.1. Interacts with NRT2.1, NRT2.2 and isoform 1 of NRT2.3. As to expression, expressed in epidermal cells of primary and lateral roots, root-shoot junction zone, vascular tissues of adventitious root primordia, stems and coleoptiles of germinating seeds.

It localises to the cell membrane. Functionally, acts as a dual component transporter with NTR2.1, NRT2.2 and NRT2.3. Required for high-affinity nitrate transport. Involved in the regulation of NRT2.1, NRT2.2 and NRT2.3 expression, and in both, HATS (high-affinity transport system) and LATS (low-affinity transport system) activities in plant roots. Imports nitrate with high affinity when expressed with NTR2.1, NTR2.2 or NTR2.3 in a heterologous system (Xenopus oocytes). The polypeptide is High-affinity nitrate transporter-activating protein 2.1 (NAR2.1) (Oryza sativa subsp. japonica (Rice)).